A 178-amino-acid chain; its full sequence is Peptide deformylase (178 aa).

Fe cation contacts are provided by C102 and H144. E145 is an active-site residue. H148 provides a ligand contact to Fe cation.

It belongs to the polypeptide deformylase family. Fe(2+) serves as cofactor.

It catalyses the reaction N-terminal N-formyl-L-methionyl-[peptide] + H2O = N-terminal L-methionyl-[peptide] + formate. Removes the formyl group from the N-terminal Met of newly synthesized proteins. Requires at least a dipeptide for an efficient rate of reaction. N-terminal L-methionine is a prerequisite for activity but the enzyme has broad specificity at other positions. In Leptospira interrogans serogroup Icterohaemorrhagiae serovar copenhageni (strain Fiocruz L1-130), this protein is Peptide deformylase.